A 267-amino-acid polypeptide reads, in one-letter code: NADP-dependent mannitol dehydrogenase (267 aa).

NADP(+) is bound by residues asparagine 108 and lysine 141. Serine 160 acts as the Proton donor in catalysis. Residues tyrosine 175, lysine 179, isoleucine 207, and threonine 209 each coordinate NADP(+). Tyrosine 175 functions as the Proton acceptor in the catalytic mechanism. The active-site Lowers pKa of active site Tyr is the lysine 179.

It belongs to the short-chain dehydrogenases/reductases (SDR) family. Exists as monomer, dimer and tetramer.

The catalysed reaction is D-mannitol + NADP(+) = D-fructose + NADPH + H(+). In terms of biological role, interconverts D-mannitol and D-fructose. Not active with fructose 6-phosphate or NADH. The protein is NADP-dependent mannitol dehydrogenase of Davidiella tassiana (Mycosphaerella tassiana).